Reading from the N-terminus, the 275-residue chain is Mitochondrial fission factor homolog A (275 aa).

The Cytoplasmic segment spans residues 1–255; it reads MAEVNRIHYE…ENKERAKREM (255 aa). The segment at 100–171 is disordered; the sequence is DFLEPEPAAN…PLISPEDSQN (72 aa). The segment covering 114-130 has biased composition (basic and acidic residues); sequence PREEMKSHFRSRREQCR. Residues 131–142 are compositionally biased toward polar residues; sequence SENSTMRRNGQI. A coiled-coil region spans residues 223 to 253; that stretch reads LTDAASLRRQIIKLNRRLQLLEHENKERAKR. Residues 256–273 form a helical; Anchor for type IV membrane protein membrane-spanning segment; that stretch reads VMYSLTVAFWLVNSWIWL. Over 274–275 the chain is Extracellular; it reads RR.

This sequence belongs to the Tango11 family.

It localises to the mitochondrion outer membrane. The protein localises to the peroxisome. In terms of biological role, plays a role in mitochondrial and peroxisomal fission. Promotes the recruitment and association of the fission mediator dynamin-related protein 1 (DNM1L) to the mitochondrial surface. In Danio rerio (Zebrafish), this protein is Mitochondrial fission factor homolog A.